Reading from the N-terminus, the 288-residue chain is ATP synthase gamma chain (288 aa).

The protein belongs to the ATPase gamma chain family. F-type ATPases have 2 components, CF(1) - the catalytic core - and CF(0) - the membrane proton channel. CF(1) has five subunits: alpha(3), beta(3), gamma(1), delta(1), epsilon(1). CF(0) has three main subunits: a, b and c.

The protein localises to the cell inner membrane. Produces ATP from ADP in the presence of a proton gradient across the membrane. The gamma chain is believed to be important in regulating ATPase activity and the flow of protons through the CF(0) complex. This chain is ATP synthase gamma chain, found in Glaesserella parasuis serovar 5 (strain SH0165) (Haemophilus parasuis).